A 248-amino-acid polypeptide reads, in one-letter code: Proteasome subunit alpha (248 aa).

It belongs to the peptidase T1A family. In terms of assembly, the 20S proteasome core is composed of 14 alpha and 14 beta subunits that assemble into four stacked heptameric rings, resulting in a barrel-shaped structure. The two inner rings, each composed of seven catalytic beta subunits, are sandwiched by two outer rings, each composed of seven alpha subunits. The catalytic chamber with the active sites is on the inside of the barrel. Has a gated structure, the ends of the cylinder being occluded by the N-termini of the alpha-subunits. Is capped by the proteasome-associated ATPase, ARC.

It is found in the cytoplasm. The protein operates within protein degradation; proteasomal Pup-dependent pathway. With respect to regulation, the formation of the proteasomal ATPase ARC-20S proteasome complex, likely via the docking of the C-termini of ARC into the intersubunit pockets in the alpha-rings, may trigger opening of the gate for substrate entry. Interconversion between the open-gate and close-gate conformations leads to a dynamic regulation of the 20S proteasome proteolysis activity. Component of the proteasome core, a large protease complex with broad specificity involved in protein degradation. In Mycobacterium tuberculosis (strain ATCC 25177 / H37Ra), this protein is Proteasome subunit alpha.